We begin with the raw amino-acid sequence, 148 residues long: Large-conductance mechanosensitive channel (148 aa).

The next 2 membrane-spanning stretches (helical) occupy residues 9–29 and 79–99; these read AFAVKGNVVDMAVGIIIGAAF and IQTVIDFIIVAFAIFMGVKAI.

Belongs to the MscL family. As to quaternary structure, homopentamer.

The protein localises to the cell inner membrane. In terms of biological role, channel that opens in response to stretch forces in the membrane lipid bilayer. May participate in the regulation of osmotic pressure changes within the cell. This Pseudomonas savastanoi pv. phaseolicola (strain 1448A / Race 6) (Pseudomonas syringae pv. phaseolicola (strain 1448A / Race 6)) protein is Large-conductance mechanosensitive channel.